Reading from the N-terminus, the 393-residue chain is NAD(P)H-quinone oxidoreductase subunit H, chloroplastic (393 aa).

It belongs to the complex I 49 kDa subunit family. NDH is composed of at least 16 different subunits, 5 of which are encoded in the nucleus.

It localises to the plastid. The protein resides in the chloroplast thylakoid membrane. The enzyme catalyses a plastoquinone + NADH + (n+1) H(+)(in) = a plastoquinol + NAD(+) + n H(+)(out). It catalyses the reaction a plastoquinone + NADPH + (n+1) H(+)(in) = a plastoquinol + NADP(+) + n H(+)(out). NDH shuttles electrons from NAD(P)H:plastoquinone, via FMN and iron-sulfur (Fe-S) centers, to quinones in the photosynthetic chain and possibly in a chloroplast respiratory chain. The immediate electron acceptor for the enzyme in this species is believed to be plastoquinone. Couples the redox reaction to proton translocation, and thus conserves the redox energy in a proton gradient. The polypeptide is NAD(P)H-quinone oxidoreductase subunit H, chloroplastic (Fagopyrum esculentum subsp. ancestrale (Wild buckwheat)).